The primary structure comprises 3303 residues: Protein unc-80 homolog (3303 aa).

Residues 1 to 37 (MVTNAAGTAATGGATSNTTNNNNLQTNNNSHGANNNN) are compositionally biased toward low complexity. A disordered region spans residues 1 to 43 (MVTNAAGTAATGGATSNTTNNNNLQTNNNSHGANNNNDDFDFD). A helical transmembrane segment spans residues 202–222 (LFSVPTITLFVYLFAPIIHHL). Disordered stretches follow at residues 284-316 (LSAD…VSSP), 361-422 (LQQQ…SESI), 491-512 (LYQG…KDYI), 526-546 (AEEP…KKKR), 1036-1067 (FRRR…SERN), 1443-1563 (LHEP…DDTA), and 1627-1671 (VEPT…KDRI). A compositionally biased stretch (low complexity) spans 361 to 377 (LQQQQSQSRRGSRQSMN). 2 stretches are compositionally biased toward basic and acidic residues: residues 378–391 (SRDK…KFEF) and 401–422 (SMKE…SESI). Residues 495 to 505 (PGSNSRDSPGS) are compositionally biased toward polar residues. Positions 1058-1067 (SDSTSSSERN) are enriched in polar residues. A compositionally biased stretch (basic residues) spans 1490–1499 (FKRRSLKLRR). Polar residues predominate over residues 1546-1556 (DDQQPESPTDS). A compositionally biased stretch (basic and acidic residues) spans 1660–1671 (KRKDSLSRKDRI). 3 helical membrane passes run 1969 to 1989 (VYEI…ALFL), 2018 to 2038 (LPQQ…MFYV), and 2048 to 2068 (LVGS…GIMF). Disordered stretches follow at residues 2518–2550 (NGPY…FEEE), 3003–3158 (EEKR…FKAQ), and 3170–3262 (FRHS…YRDN). Residues 3003–3018 (EEKRYDRESSEQKKSD) are compositionally biased toward basic and acidic residues. 2 stretches are compositionally biased toward polar residues: residues 3033–3053 (QRPS…SHSH) and 3071–3106 (PSDT…SQSG). A compositionally biased stretch (gly residues) spans 3124–3134 (SGHGSGGGIGT). Low complexity predominate over residues 3135 to 3152 (GAASAVPSHLSHSQSLQQ). The span at 3198 to 3217 (SRLQRSKAASRKTFRLKRSR) shows a compositional bias: basic residues. A compositionally biased stretch (polar residues) spans 3226-3239 (IVTSQEEQAPQAQA). Low complexity predominate over residues 3246–3257 (SWDSVSQTSSTS).

It belongs to the unc-80 family. Interacts with unc79 and na. Can interact with unc79 independently of na.

It is found in the membrane. In terms of biological role, component of the na (narrow abdomen) sodium channel complex. In the circadian clock neurons it functions with na and unc79 to promote circadian rhythmicity. This is Protein unc-80 homolog from Drosophila melanogaster (Fruit fly).